A 344-amino-acid chain; its full sequence is Uroporphyrinogen decarboxylase (344 aa).

Residues 23-27 (RQAGR), aspartate 73, tyrosine 149, threonine 204, and histidine 321 contribute to the substrate site.

Belongs to the uroporphyrinogen decarboxylase family. In terms of assembly, homodimer.

It is found in the cytoplasm. The catalysed reaction is uroporphyrinogen III + 4 H(+) = coproporphyrinogen III + 4 CO2. It participates in porphyrin-containing compound metabolism; protoporphyrin-IX biosynthesis; coproporphyrinogen-III from 5-aminolevulinate: step 4/4. Its function is as follows. Catalyzes the decarboxylation of four acetate groups of uroporphyrinogen-III to yield coproporphyrinogen-III. This chain is Uroporphyrinogen decarboxylase, found in Francisella tularensis subsp. tularensis (strain FSC 198).